Here is a 542-residue protein sequence, read N- to C-terminus: CTP synthase (542 aa).

The segment at 1–265 (MARYIFITGG…DQEVLSAFGI (265 aa)) is amidoligase domain. Residue Ser13 participates in CTP binding. Position 13 (Ser13) interacts with UTP. Residue 14–19 (SLGKGL) coordinates ATP. An L-glutamine-binding site is contributed by Tyr54. Residue Asp71 participates in ATP binding. Mg(2+) contacts are provided by Asp71 and Glu139. CTP contacts are provided by residues 146–148 (DIE), 186–191 (KTKPTQ), and Lys222. Residues 186–191 (KTKPTQ) and Lys222 each bind UTP. 238–240 (RDV) provides a ligand contact to ATP. Positions 291–541 (TIAIVGKYTG…IAAAMEQSRL (251 aa)) constitute a Glutamine amidotransferase type-1 domain. Position 353 (Gly353) interacts with L-glutamine. Cys380 acts as the Nucleophile; for glutamine hydrolysis in catalysis. Residues 381 to 384 (FGMQ), Glu404, and Arg469 each bind L-glutamine. Catalysis depends on residues His514 and Glu516.

It belongs to the CTP synthase family. As to quaternary structure, homotetramer.

It catalyses the reaction UTP + L-glutamine + ATP + H2O = CTP + L-glutamate + ADP + phosphate + 2 H(+). The enzyme catalyses L-glutamine + H2O = L-glutamate + NH4(+). The catalysed reaction is UTP + NH4(+) + ATP = CTP + ADP + phosphate + 2 H(+). Its pathway is pyrimidine metabolism; CTP biosynthesis via de novo pathway; CTP from UDP: step 2/2. With respect to regulation, allosterically activated by GTP, when glutamine is the substrate; GTP has no effect on the reaction when ammonia is the substrate. The allosteric effector GTP functions by stabilizing the protein conformation that binds the tetrahedral intermediate(s) formed during glutamine hydrolysis. Inhibited by the product CTP, via allosteric rather than competitive inhibition. Catalyzes the ATP-dependent amination of UTP to CTP with either L-glutamine or ammonia as the source of nitrogen. Regulates intracellular CTP levels through interactions with the four ribonucleotide triphosphates. The protein is CTP synthase of Beijerinckia indica subsp. indica (strain ATCC 9039 / DSM 1715 / NCIMB 8712).